A 74-amino-acid polypeptide reads, in one-letter code: Omwaprin-b (74 aa).

Positions 1 to 24 (MSSGGLLLLLGLLTLWEVLTPVSS) are cleaved as a signal peptide. A WAP domain is found at 27–71 (RPKKPGLCPPRPQKPCVKECKNDWSCPGQQKCCNYGCIDECRDPI). 4 cysteine pairs are disulfide-bonded: Cys-34–Cys-59, Cys-42–Cys-63, Cys-46–Cys-58, and Cys-52–Cys-67.

It belongs to the venom waprin family. Expressed by the venom gland.

The protein resides in the secreted. Damages membranes of susceptible bacteria. Has antibacterial activity against the Gram-positive bacteria B.megaterium and S.warneri. After 45 minutes of treatment with this protein, B.megaterium have no visible pili and are smooth. Has no antibacterial activity against the Gram-positive bacteria B.thuringiensis, S.aureus, S.clavuligerus and B. anthracis, or the Gram-negative bacteria E.coli and A.tumefaciens. Has no hemolytic activity. Does not inhibit the proteinases elastase and cathepsin G. Is not toxic to mice. The chain is Omwaprin-b from Oxyuranus microlepidotus (Inland taipan).